A 653-amino-acid chain; its full sequence is Fusexin 1 (653 aa).

A signal peptide spans 1–23; sequence MKNGLKASVVALFFLLAASSASA. Residues 24-559 are Extracellular-facing; that stretch reads ATNSVDTVTY…MEKALSGNAG (536 aa). Intrachain disulfides connect Cys126-Cys166, Cys397-Cys440, Cys467-Cys490, and Cys502-Cys519. The segment at 154 to 159 is fusion loop; the sequence is DTWTGQ. Residues 560-580 traverse the membrane as a helical segment; the sequence is ALTWAQLLLSFIGFLAGFALV. The Cytoplasmic portion of the chain corresponds to 581-600; the sequence is GVKLGKMVDGLATEFIPLSD. 2 helical membrane passes run 601–621 and 622–642; these read AVVR…AVYQ and LVTN…TGYL. The Cytoplasmic segment spans residues 643-653; that stretch reads YLKGTTPDINL.

This sequence belongs to the HAP2/GCS1 family. Fusexin 1 subfamily. Homotrimer stabilized by interdomain contacts and numerous Ca(2+) and Na(+) ions.

It is found in the cell surface. The protein localises to the cell membrane. Its function is as follows. Exhibits fusogenic activity. Mediates cell-cell fusion in mammalian cells (bilateral fusion). The polypeptide is Fusexin 1 (Haloferax sp. (strain Q22)).